We begin with the raw amino-acid sequence, 120 residues long: Large ribosomal subunit protein uL18 (120 aa).

The protein belongs to the universal ribosomal protein uL18 family. As to quaternary structure, part of the 50S ribosomal subunit; part of the 5S rRNA/L5/L18/L25 subcomplex. Contacts the 5S and 23S rRNAs.

This is one of the proteins that bind and probably mediate the attachment of the 5S RNA into the large ribosomal subunit, where it forms part of the central protuberance. This is Large ribosomal subunit protein uL18 from Methylorubrum populi (strain ATCC BAA-705 / NCIMB 13946 / BJ001) (Methylobacterium populi).